A 1010-amino-acid polypeptide reads, in one-letter code: Sodium/potassium-transporting ATPase subunit alpha-3 (1010 aa).

Residues 1–21 (MGDKDDRFPKKKKGGTKDMDA) form a disordered region. At 1–74 (MGDKDDRFPK…NALTPPPTTP (74 aa)) the chain is on the cytoplasmic side. The interaction with phosphoinositide-3 kinase stretch occupies residues 69-71 (PPP). The chain crosses the membrane as a helical span at residues 75–95 (EWVKFCRQLFGGFSILLWTGA). Residues 96 to 118 (ILCFLAYAIQAATEDEPAGDNLY) are Extracellular-facing. Residues 119–139 (LGIVLTAVVVITGCFSYFQEA) form a helical membrane-spanning segment. Over 140–275 (KSSKIMESFK…TGKTPIAVEI (136 aa)) the chain is Cytoplasmic. The segment covering 201–216 (DNSSLTGESEPQSRSP) has biased composition (polar residues). The disordered stretch occupies residues 201–221 (DNSSLTGESEPQSRSPDCTHD). The chain crosses the membrane as a helical span at residues 276–295 (EHFIHIITGVAVFLGVTFFI). Topologically, residues 296-307 (LAIILGYTWLKA) are extracellular. A helical transmembrane segment spans residues 308–325 (VIFLIGIIVANVPEGLLA). The Cytoplasmic portion of the chain corresponds to 326 to 759 (TVTVCLTLTA…EEGRLIFDNL (434 aa)). The active-site 4-aspartylphosphate intermediate is aspartate 363. 2 residues coordinate Mg(2+): aspartate 704 and aspartate 708. The chain crosses the membrane as a helical span at residues 760 to 779 (KKSIAYTLTSNIPEITPFLF). Topologically, residues 780–789 (FIIVNIPLAL) are extracellular. The chain crosses the membrane as a helical span at residues 790 to 810 (GTITILCIDLGTDMGSAISLA). The Cytoplasmic segment spans residues 811–830 (YETAESDIMKRQPRNPCRDK). A helical transmembrane segment spans residues 831–853 (LVNERLISIAYGQIGMIQALGGF). The Extracellular portion of the chain corresponds to 854 to 905 (FSYFVILAENGFLPSQLVGIRLNWDDRSLNDLEDSYGQQWTYEQRKIVEFTC). A helical membrane pass occupies residues 906–925 (HTAFFVSIVVVQWADLIICK). Residues 926 to 938 (TRRNSVFQQGMKN) lie on the Cytoplasmic side of the membrane. Serine 930 carries the phosphoserine; by PKA modification. The helical transmembrane segment at 939–957 (KILIFGLFEETALAAFLSY) threads the bilayer. Residues 958–972 (CPGMDVALRMYPLKP) are Extracellular-facing. A helical transmembrane segment spans residues 973-993 (TWWFWAFPYSFLIFVYDEARK). At 994–1010 (LILCRNPGGWVEKETYY) the chain is on the cytoplasmic side.

Belongs to the cation transport ATPase (P-type) (TC 3.A.3) family. Type IIC subfamily. The sodium/potassium-transporting ATPase is composed of a catalytic alpha subunit, an auxiliary non-catalytic beta subunit and an additional regulatory subunit.

Its subcellular location is the cell membrane. It carries out the reaction K(+)(out) + Na(+)(in) + ATP + H2O = K(+)(in) + Na(+)(out) + ADP + phosphate + H(+). Functionally, this is the catalytic component of the active enzyme, which catalyzes the hydrolysis of ATP coupled with the exchange of sodium and potassium ions across the plasma membrane. This action creates the electrochemical gradient of sodium and potassium ions, providing the energy for active transport of various nutrients. The polypeptide is Sodium/potassium-transporting ATPase subunit alpha-3 (atp1a3) (Oreochromis mossambicus (Mozambique tilapia)).